The following is a 352-amino-acid chain: Protein Wnt-3a (352 aa).

The N-terminal stretch at 1–18 is a signal peptide; that stretch reads MASFGYFLFLCGLSQALS. Cys-77 and Cys-88 are disulfide-bonded. Residues Asn-87 and Asn-92 are each glycosylated (N-linked (GlcNAc...) asparagine). Intrachain disulfides connect Cys-128–Cys-136, Cys-138–Cys-155, Cys-203–Cys-217, Cys-205–Cys-212, Cys-281–Cys-312, Cys-297–Cys-307, Cys-311–Cys-351, Cys-327–Cys-342, Cys-329–Cys-339, and Cys-334–Cys-335. Ser-209 is lipidated: O-palmitoleoyl serine; by PORCN. Residue Asn-298 is glycosylated (N-linked (GlcNAc...) asparagine).

It belongs to the Wnt family. Palmitoleoylation is required for efficient binding to frizzled receptors. Depalmitoleoylation leads to inhibit the Wnt signaling pathway. In terms of processing, disulfide bonds have critical and distinct roles in secretion and activity. Loss of each conserved cysteine in WNT3A results in high molecular weight oxidized Wnt oligomers, which are formed through inter-Wnt disulfide bonding. As to expression, expressed in cornea. Isoform 1 is expressed in the primitive streak, dorsal neural tube, proximal otic vesicle, the apical ectodermal ridge and the epithelium of feather buds.

It is found in the secreted. It localises to the extracellular space. Its subcellular location is the extracellular matrix. The protein resides in the cytoplasm. Its function is as follows. Ligand for members of the frizzled family of seven transmembrane receptors. Functions in the canonical Wnt signaling pathway that results in activation of transcription factors of the TCF/LEF family. Regulates chick apical ectodermal ridge formation. Required for normal embryonic mesoderm development and formation of caudal somites. Required for normal morphogenesis of the developing neural tube. The sequence is that of Protein Wnt-3a (WNT3A) from Gallus gallus (Chicken).